A 51-amino-acid chain; its full sequence is Large ribosomal subunit protein eL39 (51 aa).

The protein belongs to the eukaryotic ribosomal protein eL39 family.

The polypeptide is Large ribosomal subunit protein eL39 (rpl39e) (Methanothermobacter thermautotrophicus (strain ATCC 29096 / DSM 1053 / JCM 10044 / NBRC 100330 / Delta H) (Methanobacterium thermoautotrophicum)).